Here is a 662-residue protein sequence, read N- to C-terminus: Sodium/glucose cotransporter 1 (662 aa).

Over 1-24 (MDSSTWSPATTATTEPLKPHERIR) the chain is Extracellular. Residues 25 to 47 (NAADISVIVIYFVVVMAVGLWAM) form a helical membrane-spanning segment. At 48–66 (CSTNRGTVGGFFLAGRSMV) the chain is on the cytoplasmic side. The chain crosses the membrane as a helical span at residues 67 to 90 (WWPVGASLFASNIGSGHFVGLAGT). At 91–95 (GAAAG) the chain is on the extracellular side. A helical transmembrane segment spans residues 96–117 (IATGGFEWNALIWVVVLGWLFV). Topologically, residues 118–139 (PIYIKAGVVTMPEYLRKRFGGK) are cytoplasmic. The helical transmembrane segment at 140–169 (RIQVYLSILSLMLYIFTKISADIFSGAIFI) threads the bilayer. At 170–176 (TLALGLD) the chain is on the extracellular side. The helical transmembrane segment at 177-193 (LYLAIFLLLAITGLYTI) threads the bilayer. The Cytoplasmic segment spans residues 194–202 (TGGLAAVIY). A helical membrane pass occupies residues 203–221 (TDTLQTAIMLVGSFILTGF). Residues 222–275 (AFHEVGGYDAFMEKYMNAIPTVISDGNITIKKECYTPRADSFHIFRDPLKGDLP) lie on the Extracellular side of the membrane. An N-linked (GlcNAc...) asparagine glycan is attached at Asn248. Cystine bridges form between Cys255/Cys511, Cys255/Cys608, Cys345/Cys351, Cys355/Cys361, and Cys517/Cys522. The chain crosses the membrane as a helical span at residues 276-295 (WPGLTFGLSILALWYWCTDQ). Topologically, residues 296 to 309 (VIVQRCLSAKNMSH) are cytoplasmic. The chain crosses the membrane as a helical span at residues 310–331 (VKAGCVMCGYFKLLPMFVIVMP). The Extracellular segment spans residues 332 to 375 (GMISRVLYTEKIACTVPSECEKYCGTKVGCSNIAYPTLVVELMP). The chain crosses the membrane as a helical span at residues 376 to 406 (NGLRGLMLSVMLASLMSSLTSIFNSASTLFT). Residues 407 to 422 (MDVYTKIRKRASEKEL) lie on the Cytoplasmic side of the membrane. Residues 423–444 (MIAGRLFILVLIGISIAWVPIV) traverse the membrane as a helical segment. The Extracellular segment spans residues 445-451 (QSAQSGQ). A helical membrane pass occupies residues 452-477 (LFDYIQSVTSYLGPPIAAVFLLAIFC). At 478–481 (KRVN) the chain is on the cytoplasmic side. The helical transmembrane segment at 482–504 (EEGAFWGLVIGCMIGLARMITEF) threads the bilayer. At 505-525 (AYGTGSCVEPSNCPTIICGVH) the chain is on the extracellular side. Residues 526 to 547 (YLYFAIILFVISIIIVLVVSLF) form a helical membrane-spanning segment. The Cytoplasmic segment spans residues 548–642 (TKPIPDVHLY…TSEKPLWRTV (95 aa)). Thr587 bears the Phosphothreonine mark. The chain crosses the membrane as a helical span at residues 643 to 660 (VNINGIILLTVAVFCHAY). Residues 661–662 (FA) lie on the Extracellular side of the membrane.

This sequence belongs to the sodium:solute symporter (SSF) (TC 2.A.21) family. Post-translationally, N-glycosylation is not necessary for the cotransporter function.

The protein resides in the apical cell membrane. The catalysed reaction is D-glucose(out) + 2 Na(+)(out) = D-glucose(in) + 2 Na(+)(in). The enzyme catalyses D-galactose(out) + 2 Na(+)(out) = D-galactose(in) + 2 Na(+)(in). Its activity is regulated as follows. Enhanced by the interaction with PDZK1IP1/MAP17; but unlike SLC5A2/SGLT2, PDZK1IP1 is not essential for SLC5A1 transporter activity. Possibly modulated by cholesterol binding. In terms of biological role, electrogenic Na(+)-coupled sugar symporter that actively transports D-glucose or D-galactose at the plasma membrane, with a Na(+) to sugar coupling ratio of 2:1. Transporter activity is driven by a transmembrane Na(+) electrochemical gradient set by the Na(+)/K(+) pump. Has a primary role in the transport of dietary monosaccharides from enterocytes to blood. Responsible for the absorption of D-glucose or D-galactose across the apical brush-border membrane of enterocytes, whereas basolateral exit is provided by GLUT2. Additionally, functions as a D-glucose sensor in enteroendocrine cells, triggering the secretion of the incretins GCG and GIP that control food intake and energy homeostasis. Together with SGLT2, functions in reabsorption of D-glucose from glomerular filtrate, playing a nonredundant role in the S3 segment of the proximal tubules. Transports D-glucose into endometrial epithelial cells, controlling glycogen synthesis and nutritional support for the embryo as well as the decidual transformation of endometrium prior to conception. Acts as a water channel enabling passive water transport in response to the osmotic gradient created upon sugar and Na(+) uptake. Has high water conductivity comparable to aquaporins and therefore is expected to play an important role in transepithelial water permeability, especially in the small intestine. This chain is Sodium/glucose cotransporter 1 (SLC5A1), found in Sus scrofa (Pig).